A 720-amino-acid chain; its full sequence is MSSRTNVVGIDFGNSKTVIAVARNRAIDVIVNEVSNRSTPSLVSYGERSRFLGEAAKSAEASNFRNTVGSLKRLAGRTYDDPEIKDIESNFISAKLTEVDGFVGAKVQYLNEETAFSNIQLIAAYFTKIKAIAEAELIGSVSDVVISIPAWFTDIQRRALLEAANIAGLNPLRLMNDNAAAALTYGITKTDLPEPESPRRVAIVDFGHSNYSVSIVEFSRGQFHIKSTVCDRNLGSRNMDKALIDYFAAEFKEKYKIDVLSNPKATFRLATAVERLKKVLSANANAPLNVEMIMNDIDASSFIKRSDFEELIKPLLERLTPPIEKALELAGIKKEDLYSIEMVGGCTRVPIVKEVIANYFGKGLSFTLNQDEAVARGCALSCAILSPVFRVREFHVHDVTTYPITFSWEPIPENPEEDSSLEVFSEGNPIPSTKILTFYRKAPFKLLAAYSKEAQLPGSIKQNIAQYLINDVVPNKDGDLSIVKIKVRLDLHGILVVEQAYIVEEQEVEEPVETSPEEEAEKKTDEPVKMRKVKKLVKVADLSVSVQEDRLPTEVLEKYREAEHQMIATDKLVAETVDRKNALEEYIYDTRAKLDDIYAPFTNEEESSKFKEMLTKAEDWLYEEGEDTTKAVYTAKLEDLMRVGGPIRQRYLDAEEAKRQKVQAEREAAKAATKSEAEKQKPSGKFEEGTGGRAPPPPPAEEVAPENEEVETMEIDEQKE.

A Phosphoserine modification is found at serine 38. Residue threonine 39 is modified to Phosphothreonine. The span at 658 to 690 shows a compositional bias: basic and acidic residues; sequence KRQKVQAEREAAKAATKSEAEKQKPSGKFEEGT. Positions 658–720 are disordered; that stretch reads KRQKVQAERE…ETMEIDEQKE (63 aa). A compositionally biased stretch (acidic residues) spans 703-720; that stretch reads VAPENEEVETMEIDEQKE.

This sequence belongs to the heat shock protein 70 family.

The protein localises to the cytoplasm. In terms of biological role, required for normal growth at various temperatures. The polypeptide is Heat shock protein homolog pss1 (pss1) (Schizosaccharomyces pombe (strain 972 / ATCC 24843) (Fission yeast)).